The primary structure comprises 212 residues: ATP-dependent Clp protease proteolytic subunit (212 aa).

Ser113 (nucleophile) is an active-site residue. His138 is a catalytic residue.

This sequence belongs to the peptidase S14 family. Fourteen ClpP subunits assemble into 2 heptameric rings which stack back to back to give a disk-like structure with a central cavity, resembling the structure of eukaryotic proteasomes.

Its subcellular location is the cytoplasm. It catalyses the reaction Hydrolysis of proteins to small peptides in the presence of ATP and magnesium. alpha-casein is the usual test substrate. In the absence of ATP, only oligopeptides shorter than five residues are hydrolyzed (such as succinyl-Leu-Tyr-|-NHMec, and Leu-Tyr-Leu-|-Tyr-Trp, in which cleavage of the -Tyr-|-Leu- and -Tyr-|-Trp bonds also occurs).. Cleaves peptides in various proteins in a process that requires ATP hydrolysis. Has a chymotrypsin-like activity. Plays a major role in the degradation of misfolded proteins. This is ATP-dependent Clp protease proteolytic subunit from Saccharophagus degradans (strain 2-40 / ATCC 43961 / DSM 17024).